The sequence spans 516 residues: Ribonuclease Y (516 aa).

The chain crosses the membrane as a helical span at residues 1–21 (MLIKIVIACVITAIIVALIAW). The KH domain maps to 206–269 (TISVVQLPND…ETARIALEKL (64 aa)). One can recognise an HD domain in the interval 332–425 (ALKHSIEVAI…VQAADTISAA (94 aa)).

It belongs to the RNase Y family.

Its subcellular location is the cell membrane. Functionally, endoribonuclease that initiates mRNA decay. The polypeptide is Ribonuclease Y (Lachnoclostridium phytofermentans (strain ATCC 700394 / DSM 18823 / ISDg) (Clostridium phytofermentans)).